The chain runs to 232 residues: MKIGIIGAMEEEVTLLRDKIDNRQTITLGGCEIYTGQLNGTEVALLKSGIGKVAAALGATLLLEHCKPDVIINTGSAGGLASTLKVGDIVVSDETRYHDADVTAFGYEYGQLPGCPAGFKADDKLIAAAESCIRELNLNAVRGLIVSGDAFINGSVGLAKIRHNFPDAVAVEMEATAIAHVCHNFNVPFVVVRAISDVADQQSHLSFDEFLAVAAKQSTLMVETLVQKLAHG.

The Proton acceptor role is filled by Glu-12. Residues Gly-78, Ile-152, and 173 to 174 (ME) contribute to the substrate site. Catalysis depends on Asp-197, which acts as the Proton donor.

It belongs to the PNP/UDP phosphorylase family. MtnN subfamily. Homodimer.

It carries out the reaction S-adenosyl-L-homocysteine + H2O = S-(5-deoxy-D-ribos-5-yl)-L-homocysteine + adenine. The catalysed reaction is S-methyl-5'-thioadenosine + H2O = 5-(methylsulfanyl)-D-ribose + adenine. The enzyme catalyses 5'-deoxyadenosine + H2O = 5-deoxy-D-ribose + adenine. The protein operates within amino-acid biosynthesis; L-methionine biosynthesis via salvage pathway; S-methyl-5-thio-alpha-D-ribose 1-phosphate from S-methyl-5'-thioadenosine (hydrolase route): step 1/2. In terms of biological role, catalyzes the irreversible cleavage of the glycosidic bond in both 5'-methylthioadenosine (MTA) and S-adenosylhomocysteine (SAH/AdoHcy) to adenine and the corresponding thioribose, 5'-methylthioribose and S-ribosylhomocysteine, respectively. Also cleaves 5'-deoxyadenosine, a toxic by-product of radical S-adenosylmethionine (SAM) enzymes, into 5-deoxyribose and adenine. Thus, is required for in vivo function of the radical SAM enzymes biotin synthase and lipoic acid synthase, that are inhibited by 5'-deoxyadenosine accumulation. This is 5'-methylthioadenosine/S-adenosylhomocysteine nucleosidase from Salmonella choleraesuis (strain SC-B67).